Here is a 150-residue protein sequence, read N- to C-terminus: Aspartate 1-decarboxylase (150 aa).

Ser-24 serves as the catalytic Schiff-base intermediate with substrate; via pyruvic acid. Ser-24 carries the pyruvic acid (Ser) modification. Residue Thr-56 coordinates substrate. The Proton donor role is filled by Tyr-57. 72 to 74 (GAA) lines the substrate pocket.

It belongs to the PanD family. As to quaternary structure, heterooctamer of four alpha and four beta subunits. Requires pyruvate as cofactor. In terms of processing, is synthesized initially as an inactive proenzyme, which is activated by self-cleavage at a specific serine bond to produce a beta-subunit with a hydroxyl group at its C-terminus and an alpha-subunit with a pyruvoyl group at its N-terminus.

Its subcellular location is the cytoplasm. The catalysed reaction is L-aspartate + H(+) = beta-alanine + CO2. It participates in cofactor biosynthesis; (R)-pantothenate biosynthesis; beta-alanine from L-aspartate: step 1/1. Its function is as follows. Catalyzes the pyruvoyl-dependent decarboxylation of aspartate to produce beta-alanine. In Beijerinckia indica subsp. indica (strain ATCC 9039 / DSM 1715 / NCIMB 8712), this protein is Aspartate 1-decarboxylase.